The primary structure comprises 285 residues: Bis(5'-nucleosyl)-tetraphosphatase, symmetrical (285 aa).

This sequence belongs to the Ap4A hydrolase family.

The enzyme catalyses P(1),P(4)-bis(5'-adenosyl) tetraphosphate + H2O = 2 ADP + 2 H(+). Functionally, hydrolyzes diadenosine 5',5'''-P1,P4-tetraphosphate to yield ADP. The chain is Bis(5'-nucleosyl)-tetraphosphatase, symmetrical from Colwellia psychrerythraea (strain 34H / ATCC BAA-681) (Vibrio psychroerythus).